Here is an 875-residue protein sequence, read N- to C-terminus: Aminopeptidase M1-B (875 aa).

The tract at residues 96–203 (IGEGVLKMDF…MSTYLVAIVV (108 aa)) is required for membrane association. Residues glutamate 136 and 269-273 (GAMEN) contribute to the substrate site. Histidine 305 is a binding site for Zn(2+). The active-site Proton acceptor is glutamate 306. The Zn(2+) site is built by histidine 309 and glutamate 328. The short motif at 722–723 (LL) is the Dileucine internalization motif element.

The protein belongs to the peptidase M1 family. Homodimer. Zn(2+) is required as a cofactor.

The protein resides in the membrane. It is found in the microsome membrane. The protein localises to the cytoplasm. It catalyses the reaction Release of an N-terminal amino acid, Xaa-|-Yaa- from a peptide, amide or arylamide. Xaa is preferably Ala, but may be most amino acids including Pro (slow action). When a terminal hydrophobic residue is followed by a prolyl residue, the two may be released as an intact Xaa-Pro dipeptide.. The chain is Aminopeptidase M1-B from Oryza sativa subsp. japonica (Rice).